The following is a 104-amino-acid chain: Nucleoid-associated protein Amuc_1227 (104 aa).

It belongs to the YbaB/EbfC family. As to quaternary structure, homodimer.

It localises to the cytoplasm. Its subcellular location is the nucleoid. In terms of biological role, binds to DNA and alters its conformation. May be involved in regulation of gene expression, nucleoid organization and DNA protection. This Akkermansia muciniphila (strain ATCC BAA-835 / DSM 22959 / JCM 33894 / BCRC 81048 / CCUG 64013 / CIP 107961 / Muc) protein is Nucleoid-associated protein Amuc_1227.